A 313-amino-acid chain; its full sequence is tRNA dimethylallyltransferase (313 aa).

11–18 (GPTASGKT) is a binding site for ATP. 13-18 (TASGKT) is a binding site for substrate. 2 interaction with substrate tRNA regions span residues 36–39 (DSRQ) and 160–164 (QRLIR).

This sequence belongs to the IPP transferase family. Monomer. Mg(2+) serves as cofactor.

The catalysed reaction is adenosine(37) in tRNA + dimethylallyl diphosphate = N(6)-dimethylallyladenosine(37) in tRNA + diphosphate. Catalyzes the transfer of a dimethylallyl group onto the adenine at position 37 in tRNAs that read codons beginning with uridine, leading to the formation of N6-(dimethylallyl)adenosine (i(6)A). This chain is tRNA dimethylallyltransferase, found in Chlorobaculum parvum (strain DSM 263 / NCIMB 8327) (Chlorobium vibrioforme subsp. thiosulfatophilum).